The following is a 383-amino-acid chain: Cytochrome b (383 aa).

4 consecutive transmembrane segments (helical) span residues 30–50 (FGSLLGLCLGIQILTGVLLAM), 74–96 (WILRYVHANGASLFFICVYCHIG), 109–129 (TWIVGVLIYFIMMLTAFIGYV), and 175–195 (FFSLHYLLPFVLVGLVLAHLL). Positions 80 and 94 each coordinate heme b. Residues His179 and His193 each contribute to the heme b site. His198 contributes to the a ubiquinone binding site. 4 helical membrane-spanning segments follow: residues 221-241 (FTIKDILGFLILLGVFVIIGI), 289-309 (GVLALFASILVLLLMPILDRS), 320-340 (AKFFFWFIVGDFFILTWIGSA), and 345-365 (EPYVLIGRIATIFYFGYFLVL).

This sequence belongs to the cytochrome b family. As to quaternary structure, the main subunits of complex b-c1 are: cytochrome b, cytochrome c1 and the Rieske protein. The cofactor is heme b.

The protein resides in the mitochondrion inner membrane. Component of the ubiquinol-cytochrome c reductase complex (complex III or cytochrome b-c1 complex) that is part of the mitochondrial respiratory chain. The b-c1 complex mediates electron transfer from ubiquinol to cytochrome c. Contributes to the generation of a proton gradient across the mitochondrial membrane that is then used for ATP synthesis. This is Cytochrome b (mt:Cyt-b) from Trichoplax adhaerens (Trichoplax reptans).